The chain runs to 173 residues: dCTP deaminase, dUMP-forming (173 aa).

Residues 93 to 98 (RSSIGR), aspartate 111, 119 to 121 (TLE), glutamine 138, and tyrosine 151 contribute to the dCTP site. Glutamate 121 acts as the Proton donor/acceptor in catalysis.

It belongs to the dCTP deaminase family. In terms of assembly, homotrimer.

It catalyses the reaction dCTP + 2 H2O = dUMP + NH4(+) + diphosphate. The protein operates within pyrimidine metabolism; dUMP biosynthesis; dUMP from dCTP: step 1/1. Its function is as follows. Bifunctional enzyme that catalyzes both the deamination of dCTP to dUTP and the hydrolysis of dUTP to dUMP without releasing the toxic dUTP intermediate. This is dCTP deaminase, dUMP-forming from Cytophaga hutchinsonii (strain ATCC 33406 / DSM 1761 / CIP 103989 / NBRC 15051 / NCIMB 9469 / D465).